A 483-amino-acid polypeptide reads, in one-letter code: NADH-quinone oxidoreductase subunit N (483 aa).

Transmembrane regions (helical) follow at residues 9–29 (LVLP…WGAF), 35–55 (PLFT…AVVG), 69–89 (AAAT…IVLG), 104–124 (AVLV…GDLI), 158–178 (FVLG…IYGF), 201–221 (VGLL…VSAA), 234–254 (APTS…MMMF), 272–292 (VLII…LAQT), 297–317 (LWAY…ATGG), 325–345 (LLFM…LQAL), 368–388 (IAVA…FSGF), 404–424 (VLLQ…AFYY), and 449–469 (AVGF…LIWL).

Belongs to the complex I subunit 2 family. NDH-1 is composed of 14 different subunits. Subunits NuoA, H, J, K, L, M, N constitute the membrane sector of the complex.

It localises to the cell inner membrane. It catalyses the reaction a quinone + NADH + 5 H(+)(in) = a quinol + NAD(+) + 4 H(+)(out). Functionally, NDH-1 shuttles electrons from NADH, via FMN and iron-sulfur (Fe-S) centers, to quinones in the respiratory chain. The immediate electron acceptor for the enzyme in this species is believed to be ubiquinone. Couples the redox reaction to proton translocation (for every two electrons transferred, four hydrogen ions are translocated across the cytoplasmic membrane), and thus conserves the redox energy in a proton gradient. The chain is NADH-quinone oxidoreductase subunit N from Caulobacter sp. (strain K31).